The chain runs to 410 residues: Cysteine desulfurase IscS (410 aa).

Residues 80 to 81 (AT), Asn160, Gln188, and 208 to 210 (SGH) each bind pyridoxal 5'-phosphate. At Lys211 the chain carries N6-(pyridoxal phosphate)lysine. Position 248 (Thr248) interacts with pyridoxal 5'-phosphate. Cys334 (cysteine persulfide intermediate) is an active-site residue. Cys334 provides a ligand contact to [2Fe-2S] cluster.

Belongs to the class-V pyridoxal-phosphate-dependent aminotransferase family. NifS/IscS subfamily. Homodimer. Forms a heterotetramer with IscU, interacts with other sulfur acceptors. It depends on pyridoxal 5'-phosphate as a cofactor.

The protein resides in the cytoplasm. The enzyme catalyses (sulfur carrier)-H + L-cysteine = (sulfur carrier)-SH + L-alanine. It functions in the pathway cofactor biosynthesis; iron-sulfur cluster biosynthesis. Its function is as follows. Master enzyme that delivers sulfur to a number of partners involved in Fe-S cluster assembly, tRNA modification or cofactor biosynthesis. Catalyzes the removal of elemental sulfur atoms from cysteine to produce alanine. Functions as a sulfur delivery protein for Fe-S cluster synthesis onto IscU, an Fe-S scaffold assembly protein, as well as other S acceptor proteins. This chain is Cysteine desulfurase IscS, found in Rickettsia conorii (strain ATCC VR-613 / Malish 7).